The following is a 68-amino-acid chain: Large ribosomal subunit protein uL29 (68 aa).

Belongs to the universal ribosomal protein uL29 family.

The sequence is that of Large ribosomal subunit protein uL29 from Parvibaculum lavamentivorans (strain DS-1 / DSM 13023 / NCIMB 13966).